Consider the following 357-residue polypeptide: UDP-N-acetylglucosamine--N-acetylmuramyl-(pentapeptide) pyrophosphoryl-undecaprenol N-acetylglucosamine transferase (357 aa).

UDP-N-acetyl-alpha-D-glucosamine-binding positions include 11-13, Asn-120, Arg-161, Ser-188, and Gln-281; that span reads TGG.

It belongs to the glycosyltransferase 28 family. MurG subfamily.

The protein resides in the cell inner membrane. It carries out the reaction di-trans,octa-cis-undecaprenyl diphospho-N-acetyl-alpha-D-muramoyl-L-alanyl-D-glutamyl-meso-2,6-diaminopimeloyl-D-alanyl-D-alanine + UDP-N-acetyl-alpha-D-glucosamine = di-trans,octa-cis-undecaprenyl diphospho-[N-acetyl-alpha-D-glucosaminyl-(1-&gt;4)]-N-acetyl-alpha-D-muramoyl-L-alanyl-D-glutamyl-meso-2,6-diaminopimeloyl-D-alanyl-D-alanine + UDP + H(+). Its pathway is cell wall biogenesis; peptidoglycan biosynthesis. Cell wall formation. Catalyzes the transfer of a GlcNAc subunit on undecaprenyl-pyrophosphoryl-MurNAc-pentapeptide (lipid intermediate I) to form undecaprenyl-pyrophosphoryl-MurNAc-(pentapeptide)GlcNAc (lipid intermediate II). In Prochlorococcus marinus (strain SARG / CCMP1375 / SS120), this protein is UDP-N-acetylglucosamine--N-acetylmuramyl-(pentapeptide) pyrophosphoryl-undecaprenol N-acetylglucosamine transferase.